Here is a 260-residue protein sequence, read N- to C-terminus: UPF0246 protein APL_0602 (260 aa).

Belongs to the UPF0246 family.

The chain is UPF0246 protein APL_0602 from Actinobacillus pleuropneumoniae serotype 5b (strain L20).